Here is a 952-residue protein sequence, read N- to C-terminus: Eukaryotic translation initiation factor 3 subunit A (952 aa).

Residues 315 to 491 (HAERAGIVND…QTITFVSTPP (177 aa)) form the PCI domain. Residues 522-849 (DAFAAAIAQA…RRQAEKAAAT (328 aa)) adopt a coiled-coil conformation. The span at 757-797 (EKVIKRKREEKERKLKEAREAEERKRKEEEEAAQKAEEEAR) shows a compositional bias: basic and acidic residues. Positions 757 to 952 (EKVIKRKREE…RGMPSTRGGA (196 aa)) are disordered. Low complexity predominate over residues 798–809 (AAAALEAEAAAA). Basic and acidic residues predominate over residues 810–844 (EQRRAEREAQRQSDLERIRAQQEREEEALRRRQAE). Low complexity-rich tracts occupy residues 856 to 878 (RPPARAGTTPPTASPAPSSGGPS) and 893 to 918 (GAPVASSPKPVPSNSAAASAPASNGP).

Belongs to the eIF-3 subunit A family. Component of the eukaryotic translation initiation factor 3 (eIF-3) complex.

Its subcellular location is the cytoplasm. RNA-binding component of the eukaryotic translation initiation factor 3 (eIF-3) complex, which is involved in protein synthesis of a specialized repertoire of mRNAs and, together with other initiation factors, stimulates binding of mRNA and methionyl-tRNAi to the 40S ribosome. The eIF-3 complex specifically targets and initiates translation of a subset of mRNAs involved in cell proliferation. The sequence is that of Eukaryotic translation initiation factor 3 subunit A from Cryptococcus neoformans var. neoformans serotype D (strain B-3501A) (Filobasidiella neoformans).